The sequence spans 147 residues: MKLENLKSKEGSRHKTKRVGRGFGSGIGKTSTRGSKGQKSRKSGHTRPGFEGGQTTLYRRIPKIGFNNKNFANNYNVVTLNNIVKLNLANVDKKVLVEKGLIEDNKLPIKVIGTATISKPISVSAHKFSKGSVATLEKSKSKFVVIK.

Residues 1-13 (MKLENLKSKEGSR) are compositionally biased toward basic and acidic residues. Residues 1–54 (MKLENLKSKEGSRHKTKRVGRGFGSGIGKTSTRGSKGQKSRKSGHTRPGFEGGQ) are disordered. Over residues 36–45 (KGQKSRKSGH) the composition is skewed to basic residues.

The protein belongs to the universal ribosomal protein uL15 family. In terms of assembly, part of the 50S ribosomal subunit.

Binds to the 23S rRNA. This is Large ribosomal subunit protein uL15 from Malacoplasma penetrans (strain HF-2) (Mycoplasma penetrans).